The following is a 106-amino-acid chain: Ribonuclease P protein component 4 (106 aa).

Cys-57, Cys-60, Cys-83, and Cys-86 together coordinate Zn(2+).

This sequence belongs to the eukaryotic/archaeal RNase P protein component 4 family. As to quaternary structure, consists of a catalytic RNA component and at least 4-5 protein subunits. Zn(2+) serves as cofactor.

It is found in the cytoplasm. It carries out the reaction Endonucleolytic cleavage of RNA, removing 5'-extranucleotides from tRNA precursor.. In terms of biological role, part of ribonuclease P, a protein complex that generates mature tRNA molecules by cleaving their 5'-ends. In Saccharolobus solfataricus (strain ATCC 35092 / DSM 1617 / JCM 11322 / P2) (Sulfolobus solfataricus), this protein is Ribonuclease P protein component 4.